The sequence spans 54 residues: Ovomucoid (54 aa).

The 51-residue stretch at 4 to 54 folds into the Kazal-like domain; the sequence is VDCSDYPRPVCTLDYMPLCGSDNKTYSNKCNFCNAVVDSNGTITLSHFGRC. 3 disulfide bridges follow: C6-C36, C14-C33, and C22-C54. N43 is a glycosylation site (N-linked (GlcNAc...) asparagine).

It localises to the secreted. The polypeptide is Ovomucoid (Corvus albus (Pied crow)).